A 205-amino-acid polypeptide reads, in one-letter code: Translation initiation factor 2 subunit beta (205 aa).

In terms of domain architecture, TRAM spans 145-203 (GIEIGKEYTVTIESTGSAGEGIARYQGYTIYVPKAKKGERVKIIIRKIKRNVAIAELAD).

This sequence belongs to the eIF-2-beta/eIF-5 family. In terms of assembly, heterotrimer composed of an alpha, a beta and a gamma chain.

In terms of biological role, eIF-2 functions in the early steps of protein synthesis by forming a ternary complex with GTP and initiator tRNA. This is Translation initiation factor 2 subunit beta from Picrophilus torridus (strain ATCC 700027 / DSM 9790 / JCM 10055 / NBRC 100828 / KAW 2/3).